We begin with the raw amino-acid sequence, 547 residues long: Methionine--tRNA ligase (547 aa).

The 'HIGH' region signature appears at 15–25 (PYANGSIHIGH). Residues Cys146, Cys149, Cys159, and Cys162 each contribute to the Zn(2+) site. A 'KMSKS' region motif is present at residues 332–336 (KLSKS). Lys335 provides a ligand contact to ATP.

The protein belongs to the class-I aminoacyl-tRNA synthetase family. MetG type 1 subfamily. In terms of assembly, monomer. It depends on Zn(2+) as a cofactor.

The protein localises to the cytoplasm. It catalyses the reaction tRNA(Met) + L-methionine + ATP = L-methionyl-tRNA(Met) + AMP + diphosphate. In terms of biological role, is required not only for elongation of protein synthesis but also for the initiation of all mRNA translation through initiator tRNA(fMet) aminoacylation. This Buchnera aphidicola subsp. Acyrthosiphon pisum (strain APS) (Acyrthosiphon pisum symbiotic bacterium) protein is Methionine--tRNA ligase (metG).